The sequence spans 282 residues: Energy-coupling factor transporter ATP-binding protein EcfA1 (282 aa).

The ABC transporter domain maps to Ile-6–Asp-243. ATP is bound at residue Gly-40 to Ser-47.

Belongs to the ABC transporter superfamily. Energy-coupling factor EcfA family. In terms of assembly, forms a stable energy-coupling factor (ECF) transporter complex composed of 2 membrane-embedded substrate-binding proteins (S component), 2 ATP-binding proteins (A component) and 2 transmembrane proteins (T component).

It is found in the cell membrane. In terms of biological role, ATP-binding (A) component of a common energy-coupling factor (ECF) ABC-transporter complex. Unlike classic ABC transporters this ECF transporter provides the energy necessary to transport a number of different substrates. The polypeptide is Energy-coupling factor transporter ATP-binding protein EcfA1 (Lactobacillus delbrueckii subsp. bulgaricus (strain ATCC BAA-365 / Lb-18)).